Reading from the N-terminus, the 215-residue chain is Abscisic acid receptor PYL6 (215 aa).

The tract at residues 54-209 (HVVGPSQCFS…NLQSLAKLAE (156 aa)) is START-like. Cys-61 and Cys-190 are oxidised to a cystine. Abscisate is bound by residues Lys-90, 120–125 (AAFSLE), 147–153 (RLMNYKS), and Glu-174. Positions 116 to 120 (SGLPA) match the Gate loop motif. A Latch loop motif is present at residues 146 to 148 (HRL).

The protein belongs to the PYR/PYL/RCAR abscisic acid intracellular receptor family. In terms of assembly, monomer. Homodimer. Binds ABA on one subunit only. Interacts with HAB1, ABI1 and ABI2, and possibly with other PP2Cs. Binds to CARs protein in an ABA-independent manner, both at the plasma membrane and in the nucleus. Interacts directly with CAR1 and CAR4. Interacts with MYC2 in the nucleus. Interaction with MYC2 is increased in the presence of abscisic acid.

Its subcellular location is the cytoplasm. It localises to the nucleus. The protein localises to the cell membrane. Its function is as follows. Receptor for abscisic acid (ABA) required for ABA-mediated responses such as stomatal closure and germination inhibition. Inhibits the activity of group-A protein phosphatases type 2C (PP2Cs) in an ABA-independent manner but more efficiently when activated by ABA. Can be activated by both (-)-ABA and (+)-ABA. May link ABA and jasmonate signaling pathways by modifying MYC2 transcriptional activity, and regulation of JAZ6 and JAZ8 gene expression by MYC2. In Arabidopsis thaliana (Mouse-ear cress), this protein is Abscisic acid receptor PYL6 (PYL6).